Reading from the N-terminus, the 118-residue chain is uncharacterized protein (118 aa).

Transmembrane regions (helical) follow at residues 22–44 (IIAS…FSIA), 54–71 (LSPL…PVLR), and 78–99 (PILS…VEWL).

Its subcellular location is the cell membrane. This is an uncharacterized protein from Archaeoglobus fulgidus (strain ATCC 49558 / DSM 4304 / JCM 9628 / NBRC 100126 / VC-16).